We begin with the raw amino-acid sequence, 513 residues long: Glutamyl-tRNA(Gln) amidotransferase subunit A (513 aa).

Catalysis depends on charge relay system residues Lys85 and Ser160. Residue Ser184 is the Acyl-ester intermediate of the active site.

Belongs to the amidase family. GatA subfamily. As to quaternary structure, heterotrimer of A, B and C subunits.

It carries out the reaction L-glutamyl-tRNA(Gln) + L-glutamine + ATP + H2O = L-glutaminyl-tRNA(Gln) + L-glutamate + ADP + phosphate + H(+). In terms of biological role, allows the formation of correctly charged Gln-tRNA(Gln) through the transamidation of misacylated Glu-tRNA(Gln) in organisms which lack glutaminyl-tRNA synthetase. The reaction takes place in the presence of glutamine and ATP through an activated gamma-phospho-Glu-tRNA(Gln). The sequence is that of Glutamyl-tRNA(Gln) amidotransferase subunit A from Bifidobacterium longum (strain NCC 2705).